We begin with the raw amino-acid sequence, 192 residues long: UPF0301 protein Bphyt_0868 (192 aa).

Belongs to the UPF0301 (AlgH) family.

The protein is UPF0301 protein Bphyt_0868 of Paraburkholderia phytofirmans (strain DSM 17436 / LMG 22146 / PsJN) (Burkholderia phytofirmans).